We begin with the raw amino-acid sequence, 340 residues long: Glyceraldehyde-3-phosphate dehydrogenase 2 (340 aa).

NADP(+)-binding positions include 12 to 13 (RI), Arg-78, and Thr-120. Residues 151 to 153 (SCT) and Thr-182 contribute to the D-glyceraldehyde 3-phosphate site. The active-site Nucleophile is Cys-152. Position 183 (Asn-183) interacts with NADP(+). D-glyceraldehyde 3-phosphate contacts are provided by residues Arg-197, 210–211 (TG), and Arg-233. Asn-315 serves as a coordination point for NADP(+).

Belongs to the glyceraldehyde-3-phosphate dehydrogenase family. In terms of assembly, homotetramer. Interacts with BrxC. Post-translationally, in response to oxidative stress, the active site Cys likely reacts with bacillithiol (BSH) to form mixed disulfides to protect the Cys residue against overoxidation. S-bacillithiolation presumably leads to loss of catalytic activity. Debacillithiolation by monothiol bacilliredoxin BrxC restores the activity.

The protein resides in the cytoplasm. The enzyme catalyses D-glyceraldehyde 3-phosphate + phosphate + NADP(+) = (2R)-3-phospho-glyceroyl phosphate + NADPH + H(+). It catalyses the reaction D-glyceraldehyde 3-phosphate + phosphate + NAD(+) = (2R)-3-phospho-glyceroyl phosphate + NADH + H(+). It participates in carbohydrate biosynthesis; gluconeogenesis. In terms of biological role, involved in the gluconeogenesis. Catalyzes the oxidative phosphorylation of glyceraldehyde 3-phosphate (G3P) to 1,3-bisphosphoglycerate (BPG) using the cofactor NADP. The first reaction step involves the formation of a hemiacetal intermediate between G3P and a cysteine residue, and this hemiacetal intermediate is then oxidized to a thioester, with concomitant reduction of NADP to NADPH. The reduced NADPH is then exchanged with the second NADP, and the thioester is attacked by a nucleophilic inorganic phosphate to produce BPG. The protein is Glyceraldehyde-3-phosphate dehydrogenase 2 of Bacillus subtilis (strain 168).